The sequence spans 1058 residues: Carbamoyl phosphate synthase large chain (1058 aa).

The carboxyphosphate synthetic domain stretch occupies residues 1 to 401 (MPKRTDIKKI…SLLKACRSLE (401 aa)). Positions 129, 169, 175, 176, 208, 210, 215, 241, 242, 243, 284, and 298 each coordinate ATP. The 195-residue stretch at 133-327 (KALMKALKQP…IAKIAAKIAI (195 aa)) folds into the ATP-grasp 1 domain. Residues Q284, E298, and N300 each coordinate Mg(2+). The Mn(2+) site is built by Q284, E298, and N300. The interval 402-546 (IGIYHNECKE…YSTYAFENES (145 aa)) is oligomerization domain. Positions 547–929 (QASPNKSILV…ALYKAFEASY (383 aa)) are carbamoyl phosphate synthetic domain. The 191-residue stretch at 671-861 (EKALHDINIP…MAQVATKLIL (191 aa)) folds into the ATP-grasp 2 domain. The ATP site is built by R707, S746, I748, E752, G777, V778, H779, S780, Q820, and E832. Mg(2+)-binding residues include Q820, E832, and N834. The Mn(2+) site is built by Q820, E832, and N834. The MGS-like domain maps to 930–1058 (MHVPDFGNII…ESRSFSIQSL (129 aa)). The interval 930-1058 (MHVPDFGNII…ESRSFSIQSL (129 aa)) is allosteric domain.

This sequence belongs to the CarB family. In terms of assembly, composed of two chains; the small (or glutamine) chain promotes the hydrolysis of glutamine to ammonia, which is used by the large (or ammonia) chain to synthesize carbamoyl phosphate. Tetramer of heterodimers (alpha,beta)4. Mg(2+) serves as cofactor. Mn(2+) is required as a cofactor.

It catalyses the reaction hydrogencarbonate + L-glutamine + 2 ATP + H2O = carbamoyl phosphate + L-glutamate + 2 ADP + phosphate + 2 H(+). The catalysed reaction is hydrogencarbonate + NH4(+) + 2 ATP = carbamoyl phosphate + 2 ADP + phosphate + 2 H(+). Its pathway is amino-acid biosynthesis; L-arginine biosynthesis; carbamoyl phosphate from bicarbonate: step 1/1. The protein operates within pyrimidine metabolism; UMP biosynthesis via de novo pathway; (S)-dihydroorotate from bicarbonate: step 1/3. Large subunit of the glutamine-dependent carbamoyl phosphate synthetase (CPSase). CPSase catalyzes the formation of carbamoyl phosphate from the ammonia moiety of glutamine, carbonate, and phosphate donated by ATP, constituting the first step of 2 biosynthetic pathways, one leading to arginine and/or urea and the other to pyrimidine nucleotides. The large subunit (synthetase) binds the substrates ammonia (free or transferred from glutamine from the small subunit), hydrogencarbonate and ATP and carries out an ATP-coupled ligase reaction, activating hydrogencarbonate by forming carboxy phosphate which reacts with ammonia to form carbamoyl phosphate. This is Carbamoyl phosphate synthase large chain from Streptococcus uberis (strain ATCC BAA-854 / 0140J).